A 183-amino-acid chain; its full sequence is Cell division protein SepF (183 aa).

Residues 149-183 (SSEESAAPSVMAREEEATAPAAPSPAWGTQDAING) are disordered.

The protein belongs to the SepF family. Homodimer. Interacts with FtsZ.

It localises to the cytoplasm. Functionally, cell division protein that is part of the divisome complex and is recruited early to the Z-ring. Probably stimulates Z-ring formation, perhaps through the cross-linking of FtsZ protofilaments. Its function overlaps with FtsA. The protein is Cell division protein SepF of Synechococcus sp. (strain RCC307).